The following is a 551-amino-acid chain: MRSDVIKKGIERAPHRALFKAMGLTDEELDKPLIGIVNSFNELIPGHIHLRRIAEAVKTGVRMSGGTPLEFSTIGICDGIAMGHGGMKYSLPSRELIADSIEAVVRAYNFDGIVMIASCDKIIPGMLMAMARLDIPAIFISGGPMLPGRFKGEYVDVKTVFEAVGAVKAGKMSEKELKLLEDFACPGCGSCAGMFTANTMNALTEALGISLPWNGTAPAVYAHRIRIAKQTGMQIMKLVEEDLKPSDILTPEAFEDAIAVDMALGGSTNTVLHLMAIAREAGVKLTLDTFDEISEKTPTLVKISPAGKHFVLDLYEAGGVLAIMKRLSELGLIHEDRITVSLKTVGELLRDVSVLRDDVIRPVTRPYLSRGGLMILYGSLAPKGAVLKVSAIPDIETFEGEARVFDCEEDAVKAILSGDIEKGDVVVIRYEGPKGGPGMREMLAPTSAIAGMGLDRDVALVTDGRFSGATRGLSIGHVSPEAAEGGPIALVEDGDLIRIDVKAKRIDLLVDEEELKERKAKWKPKVKEVKGYLKRYSSLVTSANTGAVFRE.

Mg(2+) is bound at residue aspartate 78. Cysteine 119 is a binding site for [2Fe-2S] cluster. Aspartate 120 and lysine 121 together coordinate Mg(2+). Lysine 121 bears the N6-carboxylysine mark. Cysteine 191 serves as a coordination point for [2Fe-2S] cluster. Glutamate 441 contributes to the Mg(2+) binding site. Serine 467 functions as the Proton acceptor in the catalytic mechanism.

It belongs to the IlvD/Edd family. In terms of assembly, homodimer. Requires [2Fe-2S] cluster as cofactor. Mg(2+) is required as a cofactor.

It catalyses the reaction (2R)-2,3-dihydroxy-3-methylbutanoate = 3-methyl-2-oxobutanoate + H2O. It carries out the reaction (2R,3R)-2,3-dihydroxy-3-methylpentanoate = (S)-3-methyl-2-oxopentanoate + H2O. The protein operates within amino-acid biosynthesis; L-isoleucine biosynthesis; L-isoleucine from 2-oxobutanoate: step 3/4. It functions in the pathway amino-acid biosynthesis; L-valine biosynthesis; L-valine from pyruvate: step 3/4. Functions in the biosynthesis of branched-chain amino acids. Catalyzes the dehydration of (2R,3R)-2,3-dihydroxy-3-methylpentanoate (2,3-dihydroxy-3-methylvalerate) into 2-oxo-3-methylpentanoate (2-oxo-3-methylvalerate) and of (2R)-2,3-dihydroxy-3-methylbutanoate (2,3-dihydroxyisovalerate) into 2-oxo-3-methylbutanoate (2-oxoisovalerate), the penultimate precursor to L-isoleucine and L-valine, respectively. The protein is Dihydroxy-acid dehydratase of Pyrococcus abyssi (strain GE5 / Orsay).